Consider the following 270-residue polypeptide: Regulatory protein RecX (270 aa).

Belongs to the RecX family.

The protein resides in the cytoplasm. Functionally, modulates RecA activity. This Bacillus thuringiensis subsp. konkukian (strain 97-27) protein is Regulatory protein RecX.